The chain runs to 129 residues: MTTDVIADMLTRIRNANQRYLKTVSVPSSKVKLEIARILKEEGFISDFTVEGDVKKTINIELKYQGKTRVIQGLKKISKPGLRVYAQANEIPQVLNGLGISIVSTSQGIMTGKKARLANAGGEVLAFIW.

This sequence belongs to the universal ribosomal protein uS8 family. Part of the 30S ribosomal subunit. Contacts proteins S5 and S12.

One of the primary rRNA binding proteins, it binds directly to 16S rRNA central domain where it helps coordinate assembly of the platform of the 30S subunit. This is Small ribosomal subunit protein uS8 from Mycoplasma capricolum subsp. capricolum (strain California kid / ATCC 27343 / NCTC 10154).